Reading from the N-terminus, the 499-residue chain is Lysine--tRNA ligase (499 aa).

Mg(2+) is bound by residues glutamate 408 and glutamate 415.

It belongs to the class-II aminoacyl-tRNA synthetase family. As to quaternary structure, homodimer. Requires Mg(2+) as cofactor.

It is found in the cytoplasm. It catalyses the reaction tRNA(Lys) + L-lysine + ATP = L-lysyl-tRNA(Lys) + AMP + diphosphate. This Bacillus cereus (strain B4264) protein is Lysine--tRNA ligase.